A 1448-amino-acid chain; its full sequence is Murinoglobulin-2 (1448 aa).

The first 24 residues, 1–24, serve as a signal peptide directing secretion; the sequence is MWKNREAQLCLFSVLLAFLPSASL. 3 cysteine pairs are disulfide-bonded: Cys48-Cys86, Cys245-Cys277, and Cys263-Cys289. Asn55 carries an N-linked (GlcNAc...) asparagine glycan. Asn295, Asn315, Asn387, and Asn502 each carry an N-linked (GlcNAc...) asparagine glycan. Intrachain disulfides connect Cys462/Cys556, Cys588/Cys748, and Cys636/Cys681. The tract at residues 678 to 709 is bait region; it reads PTYCYDLPKEPPRKDPPRKDPEPKDTVVETIR. N-linked (GlcNAc...) asparagine glycans are attached at residues Asn751 and Asn846. Cystine bridges form between Cys824-Cys860, Cys898-Cys1295, Cys1056-Cys1101, and Cys1326-Cys1441. A cross-link (isoglutamyl cysteine thioester (Cys-Gln)) is located at residues 949–952; that stretch reads CGEQ. Asn968 is a glycosylation site (N-linked (GlcNAc...) asparagine). N-linked (GlcNAc...) asparagine glycans are attached at residues Asn1114, Asn1285, and Asn1398.

The protein belongs to the protease inhibitor I39 (alpha-2-macroglobulin) family. Monomer.

The protein resides in the secreted. Functionally, a proteinase activates the inhibitor by specific proteolysis in the bait region, which, by an unknown mechanism leads to reaction at the cysteinyl-glutamyl internal thiol ester site and to a conformational change, whereby the proteinase is trapped and/or covalently bound to the inhibitor. While in the tetrameric proteinase inhibitors steric inhibition is sufficiently strong, monomeric forms need a covalent linkage between the activated glutamyl residue of the original thiol ester and a terminal amino group of a lysine or another nucleophilic group on the proteinase, for inhibition to be effective. This Rattus norvegicus (Rat) protein is Murinoglobulin-2.